A 313-amino-acid chain; its full sequence is Ribonuclease HIII (313 aa).

The segment at 63-85 (ARWGTAEPQEKKKTAKKPADPRY) is disordered. Over residues 70–82 (PQEKKKTAKKPAD) the composition is skewed to basic and acidic residues. The 217-residue stretch at 94–310 (MSVIGSDEVG…TQKAQRLADK (217 aa)) folds into the RNase H type-2 domain. The a divalent metal cation site is built by Asp-100, Glu-101, and Asp-205.

This sequence belongs to the RNase HII family. RnhC subfamily. As to quaternary structure, interacts with the RNA polymerase core. It depends on Mn(2+) as a cofactor. The cofactor is Mg(2+).

The protein resides in the cytoplasm. The catalysed reaction is Endonucleolytic cleavage to 5'-phosphomonoester.. Functionally, endonuclease that specifically degrades the RNA of RNA-DNA hybrids. This is Ribonuclease HIII (rnhC) from Bacillus subtilis (strain 168).